Consider the following 91-residue polypeptide: Small ribosomal subunit protein bS16 (91 aa).

Belongs to the bacterial ribosomal protein bS16 family.

In Exiguobacterium sp. (strain ATCC BAA-1283 / AT1b), this protein is Small ribosomal subunit protein bS16.